The primary structure comprises 485 residues: NADH-quinone oxidoreductase subunit N (485 aa).

The next 14 membrane-spanning stretches (helical) occupy residues 8 to 28, 35 to 55, 75 to 95, 105 to 125, 127 to 147, 159 to 179, 203 to 223, 235 to 255, 271 to 291, 297 to 317, 326 to 346, 374 to 394, 407 to 426, and 449 to 469; these read LIALSPLLIVGLTVVVVMLCI, FVNATMTVIGLNIALLSLYFV, FYTGLVLLASLATSTFAYPWL, FYLLVLIAALGGILLSSANHL, SLFIGIELLSLPLFGLVGYAF, YMLLSAAASSFLLFGMALIYA, LLAGLGMMIVGLGFKLSLVPF, PAPVSTFLATAGKIAVFGAVM, IVLSIIAFASIMFGNVMAVSQ, LLGYSSIAHLGYLLVALIAVQ, VGVYLVGYLFSSLGAFGVVSL, AVMTVMMLSLAGIPMTLGFFG, LWWLTGAVVLGSAIGLYYYL, and ALTAGGVVVLISSIVVLFFGL.

Belongs to the complex I subunit 2 family. In terms of assembly, NDH-1 is composed of 13 different subunits. Subunits NuoA, H, J, K, L, M, N constitute the membrane sector of the complex.

The protein resides in the cell inner membrane. It carries out the reaction a quinone + NADH + 5 H(+)(in) = a quinol + NAD(+) + 4 H(+)(out). In terms of biological role, NDH-1 shuttles electrons from NADH, via FMN and iron-sulfur (Fe-S) centers, to quinones in the respiratory chain. The immediate electron acceptor for the enzyme in this species is believed to be ubiquinone. Couples the redox reaction to proton translocation (for every two electrons transferred, four hydrogen ions are translocated across the cytoplasmic membrane), and thus conserves the redox energy in a proton gradient. The sequence is that of NADH-quinone oxidoreductase subunit N from Pectobacterium atrosepticum (strain SCRI 1043 / ATCC BAA-672) (Erwinia carotovora subsp. atroseptica).